We begin with the raw amino-acid sequence, 222 residues long: 2-C-methyl-D-erythritol 4-phosphate cytidylyltransferase (222 aa).

Belongs to the IspD/TarI cytidylyltransferase family. IspD subfamily.

The catalysed reaction is 2-C-methyl-D-erythritol 4-phosphate + CTP + H(+) = 4-CDP-2-C-methyl-D-erythritol + diphosphate. The protein operates within isoprenoid biosynthesis; isopentenyl diphosphate biosynthesis via DXP pathway; isopentenyl diphosphate from 1-deoxy-D-xylulose 5-phosphate: step 2/6. Functionally, catalyzes the formation of 4-diphosphocytidyl-2-C-methyl-D-erythritol from CTP and 2-C-methyl-D-erythritol 4-phosphate (MEP). The polypeptide is 2-C-methyl-D-erythritol 4-phosphate cytidylyltransferase (Thermotoga petrophila (strain ATCC BAA-488 / DSM 13995 / JCM 10881 / RKU-1)).